We begin with the raw amino-acid sequence, 234 residues long: Small ribosomal subunit protein uS3 (234 aa).

One can recognise a KH type-2 domain in the interval 17-86 (VEKFLTKELK…SPQVEVQQVQ (70 aa)).

The protein belongs to the universal ribosomal protein uS3 family. In terms of assembly, part of the 30S ribosomal subunit.

In terms of biological role, binds the lower part of the 30S subunit head. The chain is Small ribosomal subunit protein uS3 from Methanoculleus marisnigri (strain ATCC 35101 / DSM 1498 / JR1).